The following is a 460-amino-acid chain: Argininosuccinate lyase (460 aa).

This sequence belongs to the lyase 1 family. Argininosuccinate lyase subfamily.

Its subcellular location is the cytoplasm. The enzyme catalyses 2-(N(omega)-L-arginino)succinate = fumarate + L-arginine. It participates in amino-acid biosynthesis; L-arginine biosynthesis; L-arginine from L-ornithine and carbamoyl phosphate: step 3/3. The sequence is that of Argininosuccinate lyase from Streptococcus sanguinis (strain SK36).